The following is a 475-amino-acid chain: UDP-N-acetylmuramate--L-alanine ligase (475 aa).

Residue 118–124 (GTHGKTT) participates in ATP binding.

It belongs to the MurCDEF family.

It is found in the cytoplasm. It catalyses the reaction UDP-N-acetyl-alpha-D-muramate + L-alanine + ATP = UDP-N-acetyl-alpha-D-muramoyl-L-alanine + ADP + phosphate + H(+). It functions in the pathway cell wall biogenesis; peptidoglycan biosynthesis. Functionally, cell wall formation. The protein is UDP-N-acetylmuramate--L-alanine ligase of Paracoccus denitrificans (strain Pd 1222).